The following is a 466-amino-acid chain: Cysteine--tRNA ligase (466 aa).

Cys29 lines the Zn(2+) pocket. The short motif at 31–41 is the 'HIGH' region element; sequence ATVQAPPHIGH. The Zn(2+) site is built by Cys211, His236, and Glu240. Residues 267-271 carry the 'KMSKS' region motif; that stretch reads KMSKS. Lys270 serves as a coordination point for ATP.

Belongs to the class-I aminoacyl-tRNA synthetase family. In terms of assembly, monomer. The cofactor is Zn(2+).

The protein resides in the cytoplasm. It carries out the reaction tRNA(Cys) + L-cysteine + ATP = L-cysteinyl-tRNA(Cys) + AMP + diphosphate. The sequence is that of Cysteine--tRNA ligase from Thermobifida fusca (strain YX).